The sequence spans 774 residues: 1,4-alpha-glucan branching enzyme GlgB 1 (774 aa).

The disordered stretch occupies residues 1–66 (MTPRPSSSGP…AEVAVSPAPD (66 aa)). Residues 29–40 (KPAKAAKKKAPR) show a composition bias toward basic residues. Positions 41–55 (RTTASANASATTSVS) are enriched in low complexity. The active-site Nucleophile is the D457. The active-site Proton donor is the E510. The interval 748 to 774 (YGGGDVVNPDPVKPEPQGGTAARRASG) is disordered.

The protein belongs to the glycosyl hydrolase 13 family. GlgB subfamily. As to quaternary structure, monomer.

The catalysed reaction is Transfers a segment of a (1-&gt;4)-alpha-D-glucan chain to a primary hydroxy group in a similar glucan chain.. Its pathway is glycan biosynthesis; glycogen biosynthesis. Catalyzes the formation of the alpha-1,6-glucosidic linkages in glycogen by scission of a 1,4-alpha-linked oligosaccharide from growing alpha-1,4-glucan chains and the subsequent attachment of the oligosaccharide to the alpha-1,6 position. The polypeptide is 1,4-alpha-glucan branching enzyme GlgB 1 (glgB1) (Streptomyces coelicolor (strain ATCC BAA-471 / A3(2) / M145)).